The chain runs to 241 residues: Capsid protein (241 aa).

Positions 1–26 (MSPASSWKRKRPSSSSAQASKKRRVY) match the Bipartite nuclear localization signal motif. Residues 1–30 (MSPASSWKRKRPSSSSAQASKKRRVYRPAV) are disordered.

This sequence belongs to the geminiviridae capsid protein family. As to quaternary structure, homomultimer. Interacts with the movement protein. Binds to single-stranded and double-stranded viral DNA.

It localises to the virion. The protein localises to the host nucleus. Its function is as follows. Encapsidates the viral genome into characteristic twinned ('geminate') particles. Binds the genomic viral ssDNA and shuttles it into and out of the cell nucleus. Plays a role in protection of the genome from degradation, virus acquisition and transmission by insect vectors, infectivity, and systemic movement. The CP of monopartite geminiviruses is absolutely essential for virus movement. This chain is Capsid protein, found in Avena sativa (Oat).